The primary structure comprises 101 residues: MMPTLNDEQRKALFAELPGWSLQNDRDAIHKRFTFTDFNAAFGFMTRVALKAEQVNHHPEWFNVWNRVDITLSTHDANGLTHRDADLARFIEQAAQLTGAK.

The protein belongs to the pterin-4-alpha-carbinolamine dehydratase family.

It catalyses the reaction (4aS,6R)-4a-hydroxy-L-erythro-5,6,7,8-tetrahydrobiopterin = (6R)-L-erythro-6,7-dihydrobiopterin + H2O. The protein is Putative pterin-4-alpha-carbinolamine dehydratase (phhB) of Ralstonia nicotianae (strain ATCC BAA-1114 / GMI1000) (Ralstonia solanacearum).